Reading from the N-terminus, the 396-residue chain is tRNA-specific 2-thiouridylase MnmA (396 aa).

ATP contacts are provided by residues 35–42 (GLSGGVDS) and Leu61. Cys122 (nucleophile) is an active-site residue. Cys122 and Cys221 form a disulfide bridge. Residue Gly147 participates in ATP binding. The interaction with tRNA stretch occupies residues 171–173 (KDQ). Cys221 functions as the Cysteine persulfide intermediate in the catalytic mechanism. Positions 326-327 (RY) are interaction with tRNA.

This sequence belongs to the MnmA/TRMU family.

Its subcellular location is the cytoplasm. It carries out the reaction S-sulfanyl-L-cysteinyl-[protein] + uridine(34) in tRNA + AH2 + ATP = 2-thiouridine(34) in tRNA + L-cysteinyl-[protein] + A + AMP + diphosphate + H(+). Its function is as follows. Catalyzes the 2-thiolation of uridine at the wobble position (U34) of tRNA, leading to the formation of s(2)U34. The protein is tRNA-specific 2-thiouridylase MnmA of Parasynechococcus marenigrum (strain WH8102).